A 366-amino-acid chain; its full sequence is Beta sliding clamp (366 aa).

This sequence belongs to the beta sliding clamp family. In terms of assembly, forms a ring-shaped head-to-tail homodimer around DNA which binds and tethers DNA polymerases and other proteins to the DNA. The DNA replisome complex has a single clamp-loading complex (3 tau and 1 each of delta, delta', psi and chi subunits) which binds 3 Pol III cores (1 core on the leading strand and 2 on the lagging strand) each with a beta sliding clamp dimer. Additional proteins in the replisome are other copies of gamma, psi and chi, Ssb, DNA helicase and RNA primase.

It localises to the cytoplasm. In terms of biological role, confers DNA tethering and processivity to DNA polymerases and other proteins. Acts as a clamp, forming a ring around DNA (a reaction catalyzed by the clamp-loading complex) which diffuses in an ATP-independent manner freely and bidirectionally along dsDNA. Initially characterized for its ability to contact the catalytic subunit of DNA polymerase III (Pol III), a complex, multichain enzyme responsible for most of the replicative synthesis in bacteria; Pol III exhibits 3'-5' exonuclease proofreading activity. The beta chain is required for initiation of replication as well as for processivity of DNA replication. This chain is Beta sliding clamp (dnaN), found in Buchnera aphidicola subsp. Acyrthosiphon pisum (strain APS) (Acyrthosiphon pisum symbiotic bacterium).